The primary structure comprises 347 residues: GTP 3',8-cyclase (347 aa).

The Radical SAM core domain maps to 12-242 (FRPFGVLRLS…QRIDARWPLR (231 aa)). Arg19 is a binding site for GTP. Residues Cys26 and Cys30 each contribute to the [4Fe-4S] cluster site. An S-adenosyl-L-methionine-binding site is contributed by Tyr32. Cys33 lines the [4Fe-4S] cluster pocket. Arg65 is a GTP binding site. Gly69 serves as a coordination point for S-adenosyl-L-methionine. Thr104 provides a ligand contact to GTP. Ser129 is a binding site for S-adenosyl-L-methionine. Residue Lys178 coordinates GTP. Position 212 (Met212) interacts with S-adenosyl-L-methionine. [4Fe-4S] cluster contacts are provided by Cys275 and Cys278. 280–282 (RLR) serves as a coordination point for GTP. Cys292 contributes to the [4Fe-4S] cluster binding site.

This sequence belongs to the radical SAM superfamily. MoaA family. Monomer and homodimer. It depends on [4Fe-4S] cluster as a cofactor.

It carries out the reaction GTP + AH2 + S-adenosyl-L-methionine = (8S)-3',8-cyclo-7,8-dihydroguanosine 5'-triphosphate + 5'-deoxyadenosine + L-methionine + A + H(+). Its pathway is cofactor biosynthesis; molybdopterin biosynthesis. Its function is as follows. Catalyzes the cyclization of GTP to (8S)-3',8-cyclo-7,8-dihydroguanosine 5'-triphosphate. This is GTP 3',8-cyclase from Synechococcus sp. (strain WH7803).